The primary structure comprises 376 residues: Chaperone protein DnaJ (376 aa).

The J domain occupies 5-72; that stretch reads DFYEVLGVPK…QKRAAYDQYG (68 aa). Residues 136–214 form a CR-type zinc finger; it reads GKEAQIRIPS…CHGQGRVKKQ (79 aa). Zn(2+) contacts are provided by cysteine 149, cysteine 152, cysteine 166, cysteine 169, cysteine 188, cysteine 191, cysteine 202, and cysteine 205. 4 CXXCXGXG motif repeats span residues 149–156, 166–173, 188–195, and 202–209; these read CETCHGSG, CGTCQGSG, CPHCRGTG, and CTACHGQG. Disordered stretches follow at residues 227 to 246 and 354 to 376; these read DGMRIRSTGNGEPGTNGGPP and KKGGAKHSPSTESWTDRLKSFFS. Residues 237-246 show a composition bias toward gly residues; that stretch reads GEPGTNGGPP. Residues 367-376 show a composition bias toward basic and acidic residues; sequence WTDRLKSFFS.

It belongs to the DnaJ family. In terms of assembly, homodimer. Zn(2+) is required as a cofactor.

Its subcellular location is the cytoplasm. In terms of biological role, participates actively in the response to hyperosmotic and heat shock by preventing the aggregation of stress-denatured proteins and by disaggregating proteins, also in an autonomous, DnaK-independent fashion. Unfolded proteins bind initially to DnaJ; upon interaction with the DnaJ-bound protein, DnaK hydrolyzes its bound ATP, resulting in the formation of a stable complex. GrpE releases ADP from DnaK; ATP binding to DnaK triggers the release of the substrate protein, thus completing the reaction cycle. Several rounds of ATP-dependent interactions between DnaJ, DnaK and GrpE are required for fully efficient folding. Also involved, together with DnaK and GrpE, in the DNA replication of plasmids through activation of initiation proteins. This is Chaperone protein DnaJ from Acidovorax ebreus (strain TPSY) (Diaphorobacter sp. (strain TPSY)).